Reading from the N-terminus, the 97-residue chain is Large ribosomal subunit protein eL21 (97 aa).

This sequence belongs to the eukaryotic ribosomal protein eL21 family.

The polypeptide is Large ribosomal subunit protein eL21 (Methanoculleus marisnigri (strain ATCC 35101 / DSM 1498 / JR1)).